Reading from the N-terminus, the 464-residue chain is Argininosuccinate lyase (464 aa).

The protein belongs to the lyase 1 family. Argininosuccinate lyase subfamily.

The protein resides in the cytoplasm. The enzyme catalyses 2-(N(omega)-L-arginino)succinate = fumarate + L-arginine. It participates in amino-acid biosynthesis; L-arginine biosynthesis; L-arginine from L-ornithine and carbamoyl phosphate: step 3/3. The protein is Argininosuccinate lyase of Pseudomonas aeruginosa (strain LESB58).